The sequence spans 228 residues: Cytochrome c oxidase subunit 2 (228 aa).

Over 1-26 the chain is Mitochondrial intermembrane; sequence MRTWSNFNLQNSASPLMEQIIFFHDH. The helical transmembrane segment at 27-48 threads the bilayer; that stretch reads TLIILIMITILVGYIMINLFFN. The Mitochondrial matrix segment spans residues 49 to 62; sequence KFINRFFLVGQMIE. The helical transmembrane segment at 63–82 threads the bilayer; the sequence is LIWTVLPAITLIFIALPSLR. Over 83-228 the chain is Mitochondrial intermembrane; sequence LLYLLDELNN…FINWINNYSY (146 aa). 6 residues coordinate Cu cation: His161, Cys196, Glu198, Cys200, His204, and Met207. Glu198 lines the Mg(2+) pocket.

The protein belongs to the cytochrome c oxidase subunit 2 family. Component of the cytochrome c oxidase (complex IV, CIV), a multisubunit enzyme composed of a catalytic core of 3 subunits and several supernumerary subunits. The complex exists as a monomer or a dimer and forms supercomplexes (SCs) in the inner mitochondrial membrane with ubiquinol-cytochrome c oxidoreductase (cytochrome b-c1 complex, complex III, CIII). Cu cation serves as cofactor.

The protein localises to the mitochondrion inner membrane. It carries out the reaction 4 Fe(II)-[cytochrome c] + O2 + 8 H(+)(in) = 4 Fe(III)-[cytochrome c] + 2 H2O + 4 H(+)(out). In terms of biological role, component of the cytochrome c oxidase, the last enzyme in the mitochondrial electron transport chain which drives oxidative phosphorylation. The respiratory chain contains 3 multisubunit complexes succinate dehydrogenase (complex II, CII), ubiquinol-cytochrome c oxidoreductase (cytochrome b-c1 complex, complex III, CIII) and cytochrome c oxidase (complex IV, CIV), that cooperate to transfer electrons derived from NADH and succinate to molecular oxygen, creating an electrochemical gradient over the inner membrane that drives transmembrane transport and the ATP synthase. Cytochrome c oxidase is the component of the respiratory chain that catalyzes the reduction of oxygen to water. Electrons originating from reduced cytochrome c in the intermembrane space (IMS) are transferred via the dinuclear copper A center (CU(A)) of subunit 2 and heme A of subunit 1 to the active site in subunit 1, a binuclear center (BNC) formed by heme A3 and copper B (CU(B)). The BNC reduces molecular oxygen to 2 water molecules using 4 electrons from cytochrome c in the IMS and 4 protons from the mitochondrial matrix. In Galleria mellonella (Greater wax moth), this protein is Cytochrome c oxidase subunit 2 (COII).